Reading from the N-terminus, the 966-residue chain is Leucine--tRNA ligase (966 aa).

A 'HIGH' region motif is present at residues 71–82; sequence PYPSGAGLHVGH. Residues 561–580 form a disordered region; it reads YSPRTFDPDDADTKPETPLS. The segment covering 571–580 has biased composition (basic and acidic residues); sequence ADTKPETPLS. A 'KMSKS' region motif is present at residues 734-738; sequence KMGKS. Residue Lys737 coordinates ATP.

Belongs to the class-I aminoacyl-tRNA synthetase family.

The protein resides in the cytoplasm. The catalysed reaction is tRNA(Leu) + L-leucine + ATP = L-leucyl-tRNA(Leu) + AMP + diphosphate. This Streptomyces coelicolor (strain ATCC BAA-471 / A3(2) / M145) protein is Leucine--tRNA ligase.